The sequence spans 877 residues: Alanine--tRNA ligase (877 aa).

Residues H556, H560, C657, and H661 each coordinate Zn(2+).

Belongs to the class-II aminoacyl-tRNA synthetase family. Requires Zn(2+) as cofactor.

It localises to the cytoplasm. It catalyses the reaction tRNA(Ala) + L-alanine + ATP = L-alanyl-tRNA(Ala) + AMP + diphosphate. Its function is as follows. Catalyzes the attachment of alanine to tRNA(Ala) in a two-step reaction: alanine is first activated by ATP to form Ala-AMP and then transferred to the acceptor end of tRNA(Ala). Also edits incorrectly charged Ser-tRNA(Ala) and Gly-tRNA(Ala) via its editing domain. This is Alanine--tRNA ligase from Wolbachia pipientis wMel.